We begin with the raw amino-acid sequence, 211 residues long: Potassium-transporting ATPase KdpC subunit (211 aa).

The helical transmembrane segment at Val13–Phe35 threads the bilayer.

It belongs to the KdpC family. The system is composed of three essential subunits: KdpA, KdpB and KdpC.

The protein localises to the cell inner membrane. Its function is as follows. Part of the high-affinity ATP-driven potassium transport (or Kdp) system, which catalyzes the hydrolysis of ATP coupled with the electrogenic transport of potassium into the cytoplasm. This subunit acts as a catalytic chaperone that increases the ATP-binding affinity of the ATP-hydrolyzing subunit KdpB by the formation of a transient KdpB/KdpC/ATP ternary complex. The protein is Potassium-transporting ATPase KdpC subunit of Myxococcus xanthus (strain DK1622).